We begin with the raw amino-acid sequence, 165 residues long: uncharacterized protein (165 aa).

This is an uncharacterized protein from Escherichia coli (strain K12).